A 541-amino-acid polypeptide reads, in one-letter code: DEAD-box ATP-dependent RNA helicase 57 (541 aa).

Acidic residues predominate over residues 43 to 52 (VEEEEDTEQP). Residues 43-72 (VEEEEDTEQPEAEKVIVSSKKRKRRSSNSV) are disordered. A Q motif motif is present at residues 141-169 (ELSSRYGCEGYILRNLAELGFKEPTPIQR). Positions 172–342 (IPILLSGREC…RSIMHDAVRV (171 aa)) constitute a Helicase ATP-binding domain. Residue 185-192 (APTGSGKT) coordinates ATP. Positions 289–292 (DESD) match the DEAD box motif. One can recognise a Helicase C-terminal domain in the interval 370-514 (ALRQSFAESL…EVPSWIMSLK (145 aa)). Residues 517–541 (KWRKHRPRRDSISTKPKADKNDTDE) are disordered. Positions 525–541 (RDSISTKPKADKNDTDE) are enriched in basic and acidic residues.

This sequence belongs to the DEAD box helicase family. DDX52/ROK1 subfamily.

The catalysed reaction is ATP + H2O = ADP + phosphate + H(+). In Arabidopsis thaliana (Mouse-ear cress), this protein is DEAD-box ATP-dependent RNA helicase 57 (RH57).